The primary structure comprises 337 residues: Tryptophan--tRNA ligase 2 (337 aa).

Residues 13 to 15 and 22 to 23 each bind ATP; these read QPT and GN. The short motif at 14–23 is the 'HIGH' region element; the sequence is PTAGSFHLGN. Residue Asp-139 participates in L-tryptophan binding. ATP-binding positions include 151–153, Ile-190, and 199–203; these read GED and KMSKS. The 'KMSKS' region motif lies at 199–203; sequence KMSKS.

Belongs to the class-I aminoacyl-tRNA synthetase family. Homodimer.

It localises to the cytoplasm. It catalyses the reaction tRNA(Trp) + L-tryptophan + ATP = L-tryptophyl-tRNA(Trp) + AMP + diphosphate + H(+). Functionally, catalyzes the attachment of tryptophan to tRNA(Trp). The protein is Tryptophan--tRNA ligase 2 of Streptomyces avermitilis (strain ATCC 31267 / DSM 46492 / JCM 5070 / NBRC 14893 / NCIMB 12804 / NRRL 8165 / MA-4680).